Here is a 106-residue protein sequence, read N- to C-terminus: Thiosulfate sulfurtransferase GlpE (106 aa).

The region spanning 17–105 (EQGEAKLVDI…WQRAQLPIVR (89 aa)) is the Rhodanese domain. Catalysis depends on Cys-65, which acts as the Cysteine persulfide intermediate.

The protein belongs to the GlpE family.

Its subcellular location is the cytoplasm. It catalyses the reaction thiosulfate + hydrogen cyanide = thiocyanate + sulfite + 2 H(+). The enzyme catalyses thiosulfate + [thioredoxin]-dithiol = [thioredoxin]-disulfide + hydrogen sulfide + sulfite + 2 H(+). In terms of biological role, transferase that catalyzes the transfer of sulfur from thiosulfate to thiophilic acceptors such as cyanide or dithiols. May function in a CysM-independent thiosulfate assimilation pathway by catalyzing the conversion of thiosulfate to sulfite, which can then be used for L-cysteine biosynthesis. In Vibrio parahaemolyticus serotype O3:K6 (strain RIMD 2210633), this protein is Thiosulfate sulfurtransferase GlpE.